Consider the following 317-residue polypeptide: MYTKIIGTGSYLPEQVRTNADLEKMVETSDEWIVTRTGIRKRHIAAPNETVATMGFTAANRAIEMAGIDKDQIGLIVVATTSATHAFPSAACQIQSMLGIKGCPAFDVAAACAGFTYALSIADQYVKSGAVKHALVVGSDVLARTCDPGDRGTIIIFGDGAGAAVLSASEEPGIISTHLHADGRYGELLTLPNADRVNPDNPIYLTMAGNEVFKVAVTELAHIVDETLAANNLDRSELDWLVPHQANLRIISATAKKLGMSMDNVVVTLDRHGNTSAASVPCALDEAVRDGRIKAGQLVLLEAFGGGFTWGSALIRF.

Active-site residues include C112 and H244. The segment at 245–249 (QANLR) is ACP-binding. N274 is an active-site residue.

Belongs to the thiolase-like superfamily. FabH family. In terms of assembly, homodimer.

It localises to the cytoplasm. It carries out the reaction malonyl-[ACP] + acetyl-CoA + H(+) = 3-oxobutanoyl-[ACP] + CO2 + CoA. It functions in the pathway lipid metabolism; fatty acid biosynthesis. In terms of biological role, catalyzes the condensation reaction of fatty acid synthesis by the addition to an acyl acceptor of two carbons from malonyl-ACP. Catalyzes the first condensation reaction which initiates fatty acid synthesis and may therefore play a role in governing the total rate of fatty acid production. Possesses both acetoacetyl-ACP synthase and acetyl transacylase activities. Its substrate specificity determines the biosynthesis of branched-chain and/or straight-chain of fatty acids. This Salmonella typhimurium (strain LT2 / SGSC1412 / ATCC 700720) protein is Beta-ketoacyl-[acyl-carrier-protein] synthase III.